A 316-amino-acid polypeptide reads, in one-letter code: Probable metal transport system membrane protein TC_0342 (316 aa).

Transmembrane regions (helical) follow at residues 1-21 (MFASISPYYGVSFFEFFIVFF), 39-59 (IQVIVFFAIAVSCSIIGTFLV), 64-84 (AMYANVVSHTILFGLVCACLF), 94-114 (QNLTIAAISTTLLTGASIHFI), 124-144 (ASTALVFSLLFSASLLLLVFL), 171-191 (FLVLLXNLGVSYCFFSSFICV), 196-216 (VFAFSLGIRVKLIDYLMMFLL), 226-246 (AVGVLMSLAFLLVPGLIAKLI), 252-272 (EMMGYSMIFGVLSALIAPALS), and 286-306 (SGLAVCLLLVFYIGTLATVFV).

This sequence belongs to the ABC-3 integral membrane protein family.

The protein resides in the cell inner membrane. Functionally, part of an ATP-driven transport system TC_0338/TC_0339/TC_0341/TC_0342 for a metal. The chain is Probable metal transport system membrane protein TC_0342 from Chlamydia muridarum (strain MoPn / Nigg).